The chain runs to 334 residues: Phosphate acyltransferase (334 aa).

Belongs to the PlsX family. As to quaternary structure, homodimer. Probably interacts with PlsY.

It is found in the cytoplasm. The catalysed reaction is a fatty acyl-[ACP] + phosphate = an acyl phosphate + holo-[ACP]. It functions in the pathway lipid metabolism; phospholipid metabolism. Catalyzes the reversible formation of acyl-phosphate (acyl-PO(4)) from acyl-[acyl-carrier-protein] (acyl-ACP). This enzyme utilizes acyl-ACP as fatty acyl donor, but not acyl-CoA. The polypeptide is Phosphate acyltransferase (Fervidobacterium nodosum (strain ATCC 35602 / DSM 5306 / Rt17-B1)).